Here is a 410-residue protein sequence, read N- to C-terminus: Argininosuccinate synthase (410 aa).

Residues 11–19 and alanine 37 contribute to the ATP site; that span reads AYSGGLDTS. 2 residues coordinate L-citrulline: tyrosine 88 and serine 93. 116–124 contacts ATP; sequence SHGCTGKGN. Threonine 120, asparagine 124, and aspartate 125 together coordinate L-aspartate. Asparagine 124 serves as a coordination point for L-citrulline. L-citrulline contacts are provided by arginine 128, serine 181, serine 190, glutamate 269, and tyrosine 281.

Belongs to the argininosuccinate synthase family. Type 1 subfamily. As to quaternary structure, homotetramer.

The protein localises to the cytoplasm. The catalysed reaction is L-citrulline + L-aspartate + ATP = 2-(N(omega)-L-arginino)succinate + AMP + diphosphate + H(+). It functions in the pathway amino-acid biosynthesis; L-arginine biosynthesis; L-arginine from L-ornithine and carbamoyl phosphate: step 2/3. This Schizosaccharomyces pombe (strain 972 / ATCC 24843) (Fission yeast) protein is Argininosuccinate synthase (arg12).